Here is a 462-residue protein sequence, read N- to C-terminus: MAAKSEAMDTLVSLAKRRGLVYPSSEIYGGLRASWDYGPLGVELKNNVKRQWWRAMVQEREDIVGLDSCVILAREVWEASGHVDAFVDPLTECQSCHKRFRADHLTEAYEAKHGKPPANGLADLNCPHCGAKGAFTEPRMFSGLLRTYVGPVQDESGLAFLRPETAQGIFINYKNVEQSSRRKIPFGIAQIGKSFRNEITPGNFIFRTREFEQMEVEFFVRPGTDEEWHQYWIDTRLQWYIDLGINKDNLRLYEHPKEKLSHYSKRTVDIEYRFNFAGSEWGELEGIANRTDYDLSTHSKRSGTDLSYFDQETNTRFIPYVIEPSAGVDRTMLTFLLDAYTEDEAPNAKGKMEKRVVMRLDPRLAPVKAAVLPLSRNADLSPKARDLAAKLRKRWNVEFDDAGAIGRRYRRQDEIGTPFCVTIDFDTLEDNAVTVRERDSMAQERISIDQVEQYLAERLAGC.

2 residues coordinate substrate: arginine 101 and glutamate 164. ATP is bound by residues 196–198 (RNE), 206–211 (FRTREF), 283–284 (EL), and 327–330 (GVDR). 211–215 (FEQME) is a binding site for substrate. Residue 323 to 327 (EPSAG) coordinates substrate.

This sequence belongs to the class-II aminoacyl-tRNA synthetase family. As to quaternary structure, homodimer.

Its subcellular location is the cytoplasm. The enzyme catalyses tRNA(Gly) + glycine + ATP = glycyl-tRNA(Gly) + AMP + diphosphate. Catalyzes the attachment of glycine to tRNA(Gly). The sequence is that of Glycine--tRNA ligase from Thermobifida fusca (strain YX).